Here is a 340-residue protein sequence, read N- to C-terminus: Nitrilase (340 aa).

Positions 7-273 (IRAAAVQIAP…EGMVVADLDM (267 aa)) constitute a CN hydrolase domain. Glu-47 acts as the Proton acceptor in catalysis. Residue Lys-129 is part of the active site. Catalysis depends on Cys-163, which acts as the Nucleophile.

It belongs to the carbon-nitrogen hydrolase superfamily. Nitrilase family. In terms of assembly, forms oligomers.

It catalyses the reaction a nitrile + 2 H2O = a carboxylate + NH4(+). The enzyme catalyses phenylpropanonitrile + 2 H2O = 3-phenylpropanoate + NH4(+). It carries out the reaction an aliphatic nitrile + 2 H2O = a carboxylate + NH4(+). Its activity is regulated as follows. Highly resistant to various miscible cosolvents and tolerates high substrate concentrations. Catalyzes the hydrolysis of a broad range of nitriles to yield their corresponding carboxylic acid and ammonia. In vitro, shows high activity toward benzylic/unsaturated nitriles. The preferred substrate is trans-cinnamonitrile, followed by mono/di-cyanopyridines and aromatic substituted nitriles, with a moderate activity toward 3-phenylpropionitrile. Shows weaker activity toward the common dinitrile fumaronitrile. Also shows weak activity toward some aliphatic nitriles, including adiponitrile and glutaronitrile, and the arylacetonitrile 2-thiopheneacetonitrile. The chain is Nitrilase from Paraburkholderia phymatum (strain DSM 17167 / CIP 108236 / LMG 21445 / STM815) (Burkholderia phymatum).